The sequence spans 209 residues: Probable L-serine dehydratase, alpha chain (209 aa).

This sequence belongs to the iron-sulfur dependent L-serine dehydratase family. In terms of assembly, heterodimer of an alpha chain and a beta chain. The cofactor is [4Fe-4S] cluster.

It catalyses the reaction L-serine = pyruvate + NH4(+). Its pathway is carbohydrate biosynthesis; gluconeogenesis. The protein is Probable L-serine dehydratase, alpha chain (sdhA) of Latilactobacillus sakei (Lactobacillus sakei).